We begin with the raw amino-acid sequence, 1528 residues long: Mitogen-activated protein kinase kinae kinase MCK1 (1528 aa).

Over residues 1 to 11 (MYPGSSQSRPY) the composition is skewed to low complexity. 10 disordered regions span residues 1–84 (MYPG…PAPR), 109–208 (ATAP…VPGI), 303–418 (VHAR…NNVR), 449–481 (INGR…KLPF), 607–652 (VKPP…EARL), 695–731 (GKPV…APSA), 746–786 (VQGS…SQPM), 811–929 (SANN…SDDG), 943–1012 (KKAK…EDGK), and 1086–1191 (ATPL…ALLR). Over residues 12-21 (QVPPPPPMSP) the composition is skewed to pro residues. The segment covering 22 to 31 (PLSQMHQQMS) has biased composition (low complexity). Positions 53 to 64 (APPPPPPGPPPA) are enriched in pro residues. Residues 157–173 (SSQTWQTTSSSSTNTAS) show a composition bias toward low complexity. Composition is skewed to polar residues over residues 174-183 (VNDNVQSNAP), 191-205 (NNSA…SSNV), and 318-327 (HGRQGSINSR). The segment covering 328–337 (GNDKGTHDGS) has biased composition (basic and acidic residues). The span at 338 to 363 (DSPNTPSSQSRSTTIPTFPDGSSFSN) shows a compositional bias: polar residues. A compositionally biased stretch (low complexity) spans 396–408 (SSTPKSSTLSVSP). The segment covering 409-418 (HSSRFGNNVR) has biased composition (polar residues). 2 stretches are compositionally biased toward polar residues: residues 613 to 622 (SQQSTWSAGD) and 630 to 641 (GTSSSMSRQQNT). 2 stretches are compositionally biased toward basic and acidic residues: residues 642-652 (LKDDQSEEARL) and 698-714 (VDFD…KNTD). The span at 846-860 (RSQTAGDLSPISQMP) shows a compositional bias: polar residues. Residues 917–928 (QSDDDSGDDSDD) show a composition bias toward acidic residues. The segment covering 977–986 (VSFNSPQSAR) has biased composition (polar residues). The span at 1001–1012 (PKSDMWDSEDGK) shows a compositional bias: basic and acidic residues. Polar residues predominate over residues 1086 to 1111 (ATPLNSLPPSRVQSMYNESDTLGSDE). A compositionally biased stretch (basic and acidic residues) spans 1142-1152 (SIREKARGAHE). Polar residues predominate over residues 1158–1188 (TQTSMAAPQGLSRSGGTPATETQPTQNNSSA). Residues 1238–1507 (WFKGQLIGKG…NKLLSQHPFC (270 aa)) enclose the Protein kinase domain. Residues 1244 to 1252 (IGKGTYGRV) and Lys1267 contribute to the ATP site.

Belongs to the protein kinase superfamily. STE Ser/Thr protein kinase family. MAP kinase kinase kinase subfamily. Interacts with the adapter protein MST50 and MIP11.

It carries out the reaction L-seryl-[protein] + ATP = O-phospho-L-seryl-[protein] + ADP + H(+). The enzyme catalyses L-threonyl-[protein] + ATP = O-phospho-L-threonyl-[protein] + ADP + H(+). In terms of biological role, mitogen-activated protein kinase kinase kinase; part of the MCK1-MKK2-MPS1 MAP kinase (MAPK) signal transduction cascade that is essential for appressorium formation, penetration and invasive growth. Beside its role in pathogenesis, the MPS1 cascade is active in conidiation and cellular stress responses. Targets downstream of the the MPS1-MAPK pathway include transcription factors MIG1 and SWI6, as well as GSK1 and MPG1. This is Mitogen-activated protein kinase kinae kinase MCK1 from Pyricularia oryzae (strain 70-15 / ATCC MYA-4617 / FGSC 8958) (Rice blast fungus).